The primary structure comprises 444 residues: IMP-specific 5'-nucleotidase 1 (444 aa).

Residues K132 and H150 each coordinate ATP. Residue D170 is the Nucleophile of the active site. Positions 170, 172, 178, 204, 207, 308, 363, and 371 each coordinate IMP. D170 and D172 together coordinate Mg(2+). Residue D172 is the Proton donor of the active site. D394 serves as a coordination point for Mg(2+).

It belongs to the ISN1 family. In terms of assembly, homotetramer. Mg(2+) is required as a cofactor.

The protein localises to the cytoplasm. The catalysed reaction is IMP + H2O = inosine + phosphate. At physiological pH, allosterically activated by ATP. ATP binding is a prerequisite to magnesium and substrate binding. ATP binds to 2 of the subunits in the homotetramer inducing a closure of these 2 subunits and the release of the C-terminal loop, thereby activating the enzyme. In this conformation, the enzyme can bind IMP and magnesium which ultimately leads to the release of ATP. At pH 5, ATP does not have an allosteric role and is dispensable for magnesium and substrate binding. Inhibited by phosphocholine and D-myo-inositol-4-phosphate. Functionally, specifically, catalyzes the dephosphorylation of inosine monophosphate (IMP) into inosine. By dephosphorylating IMP, plays a role in the purine salvage pathway. Does not have phosphotransferase activity with IMP as phosphate donor and adenosine as phosphate acceptor. The sequence is that of IMP-specific 5'-nucleotidase 1 from Plasmodium falciparum (isolate 3D7).